The sequence spans 150 residues: Transcription antitermination protein NusB (150 aa).

It belongs to the NusB family.

Functionally, involved in transcription antitermination. Required for transcription of ribosomal RNA (rRNA) genes. Binds specifically to the boxA antiterminator sequence of the ribosomal RNA (rrn) operons. The protein is Transcription antitermination protein NusB of Streptococcus equi subsp. zooepidemicus (strain H70).